The chain runs to 293 residues: Homoserine kinase (293 aa).

84–94 (PISRGLGSSSA) lines the ATP pocket.

This sequence belongs to the GHMP kinase family. Homoserine kinase subfamily.

It localises to the cytoplasm. It catalyses the reaction L-homoserine + ATP = O-phospho-L-homoserine + ADP + H(+). Its pathway is amino-acid biosynthesis; L-threonine biosynthesis; L-threonine from L-aspartate: step 4/5. Catalyzes the ATP-dependent phosphorylation of L-homoserine to L-homoserine phosphate. This is Homoserine kinase from Wolinella succinogenes (strain ATCC 29543 / DSM 1740 / CCUG 13145 / JCM 31913 / LMG 7466 / NCTC 11488 / FDC 602W) (Vibrio succinogenes).